The sequence spans 741 residues: MVDTAPYIGSLGRSSLFDTGDIEQAPGNNAIGINEEDIHAFVSSTGETVQLKKKPAKLATGNISLYTNPDTVWRSDDTYGININYLLDKIEASGDDRTNAQKTSPITGKIGSDTLWVEKWRPKKFLDLVGNEKTNRRMLGWLRQWTPAVFKEQLPKLPTEKEVSDMELDPLKRPPKKILLLHGPPGIGKTSVAHVIAKQSGFSVSEINASDERAGPMVKEKIYNLLFNHTFDTNPVCLVADEIDGSIESGFIRILVDIMQSDIKATNKLLYGQPDKKDKKRKKKRSKLLTRPIICICNNLYAPSLEKLKPFCEIIAVKRPSDTTLLERLNLICHKENMNIPIKAINDLIDLAQGDVRNCINNLQFLASNVDSRDSSASDKPACAKNTWASSNKDSPISWFKIVNQLFRKDPHRDIKEQFYELLNQVELNGNSDRILQGCFNIFPYVKYSDNGIRKPANISDWLFFHDLMYQSMYAHNGELLRYSALVPLVFFQTFGDIANKDDIRMKNSEYEQRELKRANSDIVSLIMRHISVQSPLMASFTDRKSLIFEILPYLDSMISSDFNKIRNLKLKQAIMEELVQLLKSFQLNLIQNRSEGFDVRGGLTIDPPIDEVVLLNPKHINEVQHKRANNLSSLLAKIEENRAKKRHIDQVTEDRLQSQEMHSKKVKTGLNSSSSTIDFFKNQYGLLKQTQELEETQKTIGSDETNQADDCNQTVKIWVKYNEGFSNAVRKNVTWNNLWE.

183–190 (GPPGIGKT) is a binding site for ATP.

Belongs to the activator 1 small subunits family. CTF18 subfamily. Component of the CTF18-RFC complex, which consists of CTF18, CTF8, DCC1, RFC2, RFC3, RFC4 and RFC5. CTF18 interacts with ECO1.

Its subcellular location is the nucleus. Its function is as follows. Essential for the fidelity of chromosome transmission. Required for the DNA replication block checkpoint. Component of the RFC-like complex CTF18-RFC which is required for efficient establishment of chromosome cohesion during S-phase and may load or unload POL30/PCNA. During a clamp loading circle, the RFC:clamp complex binds to DNA and the recognition of the double-stranded/single-stranded junction stimulates ATP hydrolysis by RFC. The complex presumably provides bipartite ATP sites in which one subunit supplies a catalytic site for hydrolysis of ATP bound to the neighboring subunit. Dissociation of RFC from the clamp leaves the clamp encircling DNA. The chain is Chromosome transmission fidelity protein 18 (CTF18) from Saccharomyces cerevisiae (strain ATCC 204508 / S288c) (Baker's yeast).